The primary structure comprises 122 residues: Small ribosomal subunit protein uS13 (122 aa).

A disordered region spans residues 99–122 (RGQRTHTNARTRKGPAKAIAGKKK).

This sequence belongs to the universal ribosomal protein uS13 family. As to quaternary structure, part of the 30S ribosomal subunit. Forms a loose heterodimer with protein S19. Forms two bridges to the 50S subunit in the 70S ribosome.

In terms of biological role, located at the top of the head of the 30S subunit, it contacts several helices of the 16S rRNA. In the 70S ribosome it contacts the 23S rRNA (bridge B1a) and protein L5 of the 50S subunit (bridge B1b), connecting the 2 subunits; these bridges are implicated in subunit movement. Contacts the tRNAs in the A and P-sites. In Cereibacter sphaeroides (strain ATCC 17029 / ATH 2.4.9) (Rhodobacter sphaeroides), this protein is Small ribosomal subunit protein uS13.